A 347-amino-acid chain; its full sequence is MNPLASIMITLTIILGTMIVMTSSHWLLVWIGFEMNMLAIIPVLMKQHSPRAVEAATKYFLTQATASMLLMLAVVTNLLYSGQWTVTNITNPLASAVMTLALVMKLGLSPFHFWVPEVAQGIPLSSGLVLLTWQKLAPLSVLYQISHSVSPTLLLTVSLMSIAVGGWGGLNQTQLRKILAYSSIAHMGWMTAVLAYNPTLTLLNLTLYILMTTTTFLLFMFNSSTTTLTLSHSWNKSPMIATSTLTIMLSLGGLPPLTGFLPKWMIIQELTKNESLLLPTLMAMMALLSLYFYMRLTYSTSLTLFPSMNNTKMKWHLNNTKKVPLLPPMITLFTLALPLAPALSTLY.

10 consecutive transmembrane segments (helical) span residues 13 to 33 (IILGTMIVMTSSHWLLVWIGF), 59 to 79 (YFLTQATASMLLMLAVVTNLL), 96 to 116 (AVMTLALVMKLGLSPFHFWVP), 122 to 142 (IPLSSGLVLLTWQKLAPLSVL), 149 to 169 (VSPTLLLTVSLMSIAVGGWGG), 178 to 198 (ILAYSSIAHMGWMTAVLAYNP), 201 to 221 (TLLNLTLYILMTTTTFLLFMF), 247 to 267 (IMLSLGGLPPLTGFLPKWMII), 274 to 294 (ESLLLPTLMAMMALLSLYFYM), and 323 to 343 (VPLLPPMITLFTLALPLAPAL).

Belongs to the complex I subunit 2 family. As to quaternary structure, core subunit of respiratory chain NADH dehydrogenase (Complex I) which is composed of 45 different subunits. Interacts with TMEM242.

It is found in the mitochondrion inner membrane. It catalyses the reaction a ubiquinone + NADH + 5 H(+)(in) = a ubiquinol + NAD(+) + 4 H(+)(out). Functionally, core subunit of the mitochondrial membrane respiratory chain NADH dehydrogenase (Complex I) which catalyzes electron transfer from NADH through the respiratory chain, using ubiquinone as an electron acceptor. Essential for the catalytic activity and assembly of complex I. This chain is NADH-ubiquinone oxidoreductase chain 2, found in Megaderma spasma (Lesser false vampire bat).